Consider the following 191-residue polypeptide: MGKRASKLRPEEVDELKAHTYFTESEIKQWHKGFRKDCPDGKLTLEGFTKIYQQFFPFGDPSKFANFVFNVFDENKDGFISFSEFLQALSVTSRGTVEEKLKWAFRLYDLDNDGYITRDELLDIVDAIYRMVGESVTLPEEENTPEKRVNRIFQVMDKNKDDQLTFEEFLEGSKEDPTIIQALTLCDSGQA.

Gly-2 carries the N-myristoyl glycine lipid modification. 4 consecutive EF-hand domains span residues 24 to 59 (ESEI…FPFG), 60 to 95 (DPSK…TSRG), 96 to 131 (TVEE…IYRM), and 144 to 179 (TPEK…DPTI). 14 residues coordinate Ca(2+): Asp-73, Asn-75, Asp-77, Glu-84, Asp-109, Asp-111, Asp-113, Tyr-115, Glu-120, Asp-157, Asn-159, Asp-161, Gln-163, and Glu-168.

Belongs to the recoverin family.

Its subcellular location is the perikaryon. It localises to the cell projection. The protein localises to the growth cone. Its function is as follows. Neuronal calcium sensor, regulator of G protein-coupled receptor phosphorylation in a calcium dependent manner. Regulates neurite extension and branching by activity-dependent Ca(2+) influx in growth cones. The chain is Neuronal calcium sensor 1 from Lymnaea stagnalis (Great pond snail).